A 312-amino-acid polypeptide reads, in one-letter code: Methionyl-tRNA formyltransferase (312 aa).

109-112 (SLLP) provides a ligand contact to (6S)-5,6,7,8-tetrahydrofolate.

The protein belongs to the Fmt family.

It carries out the reaction L-methionyl-tRNA(fMet) + (6R)-10-formyltetrahydrofolate = N-formyl-L-methionyl-tRNA(fMet) + (6S)-5,6,7,8-tetrahydrofolate + H(+). In terms of biological role, attaches a formyl group to the free amino group of methionyl-tRNA(fMet). The formyl group appears to play a dual role in the initiator identity of N-formylmethionyl-tRNA by promoting its recognition by IF2 and preventing the misappropriation of this tRNA by the elongation apparatus. This is Methionyl-tRNA formyltransferase from Anaeromyxobacter sp. (strain K).